A 351-amino-acid polypeptide reads, in one-letter code: Putative NBPF family member NBPF5 (351 aa).

Coiled coils occupy residues 10–43 and 69–115; these read SERA…EKFL and DSVL…KLRE. The disordered stretch occupies residues 157-285; sequence HLVHKLSPEN…VPPRHHDKSN (129 aa). Over residues 165–179 the composition is skewed to acidic residues; the sequence is ENDEDEDEDEDDKDE. Residues 174-261 enclose the Olduvai domain; the sequence is EDDKDEEVEK…EEEEALNIPP (88 aa). Over residues 192-202 the composition is skewed to basic and acidic residues; sequence EVQKTEEKEVP. Residues 214 to 226 show a composition bias toward low complexity; it reads SNSHNPSNSNQPH. 2 stretches are compositionally biased toward basic and acidic residues: residues 232–251 and 264–273; these read TFKE…HPHD and QNDHEEEEGK.

Belongs to the NBPF family. In terms of tissue distribution, expressed in brain and medulla.

Its subcellular location is the cytoplasm. This is Putative NBPF family member NBPF5 from Homo sapiens (Human).